A 119-amino-acid chain; its full sequence is Holo-[acyl-carrier-protein] synthase (119 aa).

Mg(2+) contacts are provided by D8 and E50.

This sequence belongs to the P-Pant transferase superfamily. AcpS family. Mg(2+) serves as cofactor.

It localises to the cytoplasm. It catalyses the reaction apo-[ACP] + CoA = holo-[ACP] + adenosine 3',5'-bisphosphate + H(+). Functionally, transfers the 4'-phosphopantetheine moiety from coenzyme A to a Ser of acyl-carrier-protein. The chain is Holo-[acyl-carrier-protein] synthase from Clavibacter michiganensis subsp. michiganensis (strain NCPPB 382).